The sequence spans 195 residues: Putative manganese efflux pump MntP (195 aa).

Helical transmembrane passes span 3-23, 40-60, 68-88, 106-126, 132-152, and 165-185; these read LSATLILAFGMSMDAFAASVG, GLIFGVIEAITPLIGWGLGLL, WDHWVAFTLLAFLGGRMVLAG, VLIATAIATSLDALAIGVGLA, ILHAALLIGLATLIMSTIGML, and AEIIGGLILIGIGCNILYSHI.

The protein belongs to the MntP (TC 9.B.29) family.

It localises to the cell inner membrane. In terms of biological role, probably functions as a manganese efflux pump. This is Putative manganese efflux pump MntP from Sodalis glossinidius (strain morsitans).